The following is a 1105-amino-acid chain: Mediator of RNA polymerase II transcription subunit 14 (1105 aa).

The interval 28-48 (ASQQANGGIYRNGIGKKSHSP) is disordered.

Belongs to the Mediator complex subunit 14 family. In terms of assembly, component of the Mediator complex.

The protein localises to the nucleus. Component of the Mediator complex, a coactivator involved in the regulated transcription of nearly all RNA polymerase II-dependent genes. Mediator functions as a bridge to convey information from gene-specific regulatory proteins to the basal RNA polymerase II transcription machinery. Mediator is recruited to promoters by direct interactions with regulatory proteins and serves as a scaffold for the assembly of a functional preinitiation complex with RNA polymerase II and the general transcription factors. The chain is Mediator of RNA polymerase II transcription subunit 14 (RGR1) from Coccidioides immitis (strain RS) (Valley fever fungus).